A 413-amino-acid chain; its full sequence is Multifunctional CCA protein (413 aa).

Residues glycine 8 and arginine 11 each coordinate ATP. The CTP site is built by glycine 8 and arginine 11. Mg(2+) is bound by residues aspartate 21 and aspartate 23. Residues arginine 91, arginine 137, and arginine 140 each coordinate ATP. Residues arginine 91, arginine 137, and arginine 140 each coordinate CTP. Positions 225–326 constitute an HD domain; it reads TGVHVMMVID…ANLLQGVDAY (102 aa).

This sequence belongs to the tRNA nucleotidyltransferase/poly(A) polymerase family. Bacterial CCA-adding enzyme type 1 subfamily. In terms of assembly, monomer. Can also form homodimers and oligomers. Mg(2+) is required as a cofactor. Ni(2+) serves as cofactor.

It carries out the reaction a tRNA precursor + 2 CTP + ATP = a tRNA with a 3' CCA end + 3 diphosphate. The enzyme catalyses a tRNA with a 3' CCA end + 2 CTP + ATP = a tRNA with a 3' CCACCA end + 3 diphosphate. Functionally, catalyzes the addition and repair of the essential 3'-terminal CCA sequence in tRNAs without using a nucleic acid template. Adds these three nucleotides in the order of C, C, and A to the tRNA nucleotide-73, using CTP and ATP as substrates and producing inorganic pyrophosphate. tRNA 3'-terminal CCA addition is required both for tRNA processing and repair. Also involved in tRNA surveillance by mediating tandem CCA addition to generate a CCACCA at the 3' terminus of unstable tRNAs. While stable tRNAs receive only 3'-terminal CCA, unstable tRNAs are marked with CCACCA and rapidly degraded. This is Multifunctional CCA protein from Nitrosospira multiformis (strain ATCC 25196 / NCIMB 11849 / C 71).